The following is a 359-amino-acid chain: Protein mab-21-like 2 (359 aa).

It belongs to the mab-21 family.

The protein resides in the nucleus. It localises to the cytoplasm. Its function is as follows. Required for several aspects of embryonic development including normal development of the eye. The protein is Protein mab-21-like 2 (MAB21L2) of Homo sapiens (Human).